The primary structure comprises 246 residues: Exosome complex component Rrp41 (246 aa).

Belongs to the RNase PH family. Rrp41 subfamily. As to quaternary structure, component of the archaeal exosome complex. Forms a hexameric ring-like arrangement composed of 3 Rrp41-Rrp42 heterodimers. The hexameric ring associates with a trimer of Rrp4 and/or Csl4 subunits.

The protein resides in the cytoplasm. Its function is as follows. Catalytic component of the exosome, which is a complex involved in RNA degradation. Has 3'-&gt;5' exoribonuclease activity. Can also synthesize heteromeric RNA-tails. The protein is Exosome complex component Rrp41 of Pyrobaculum arsenaticum (strain DSM 13514 / JCM 11321 / PZ6).